Consider the following 92-residue polypeptide: Defensin-like protein 226 (92 aa).

Residues 1-27 (MKCGVLFMISCLLITFLVLSHVREVES) form the signal peptide. 4 disulfides stabilise this stretch: C33-C92, C43-C71, C51-C86, and C69-C88.

This sequence belongs to the DEFL family.

It is found in the secreted. This chain is Defensin-like protein 226 (SCRL2), found in Arabidopsis thaliana (Mouse-ear cress).